A 420-amino-acid polypeptide reads, in one-letter code: Glycogen synthase kinase-3 beta (420 aa).

The segment covering 1-22 (MSGRPRTTSFAESCKPVQQPSA) has biased composition (polar residues). A disordered region spans residues 1–53 (MSGRPRTTSFAESCKPVQQPSAFGSMKVSRDKDGSKVTTVVATPGQGPDRPQE). Ser-9 carries the phosphoserine; by PKB/AKT1, RPS6KA3 and SGK3 modification. Cys-14 is lipidated: S-palmitoyl cysteine. The Protein kinase domain maps to 56 to 340 (YTDTKVIGNG…PLEACAHSFF (285 aa)). Residues 62-70 (IGNGSFGVV) and Lys-85 each bind ATP. Catalysis depends on Asp-181, which acts as the Proton acceptor. Phosphotyrosine is present on Tyr-216. A disordered region spans residues 385-420 (QAAASPPANATAASDTNAGDRGQTNNAASASASNST). Composition is skewed to low complexity over residues 386 to 401 (AAAS…SDTN) and 409 to 420 (NNAASASASNST). Ser-389 is subject to Phosphoserine.

It belongs to the protein kinase superfamily. CMGC Ser/Thr protein kinase family. GSK-3 subfamily. As to quaternary structure, monomer. Interacts with DAB2IP (via C2 domain); the interaction stimulates GSK3B kinase activation. Interacts (via C2 domain) with PPP2CA. Interacts with ARRB2, AXIN1, CABYR, DISC1, MMP2, MUC1, NIN, PRUNE1 and ZBED3. Interacts with AXIN1; the interaction mediates hyperphosphorylation of CTNNB1 leading to its ubiquitination and destruction. Interacts with and phosphorylates SNAI1. Interacts with DNM1L (via a C-terminal domain). Found in a complex composed of MACF1, APC, AXIN1, CTNNB1 and GSK3B. Interacts with SGK3. Interacts with the CLOCK-BMAL1 heterodimer. Interacts with the BMAL1. Interacts with CTNND2. The complex composed, at least, of APC, CTNNB1 and GSK3B interacts with JPT1; the interaction requires the inactive form of GSK3B (phosphorylated at 'Ser-9'). Forms a complex composed of PRKAR2A or PRKAR2B, GSK3B and GSKIP through GSKIP interaction; facilitates PKA-induced phosphorylation and regulates GSK3B activity. Interacts with GSKIP. Interacts with GID8. Interacts with PIWIL2. Interacts with LMBR1L. Interacts with DDX3X. Interacts with BIRC2. Interacts with TNFRSF10B; TNFRSF10B stimulation inhibits GSK3B kinase activity. Found in a complex with SLC39A6, SLC39A10 and with GSK3B that controls NCAM1 phosphorylation. Interacts with PKP3 (via ARM repeats); the interaction may be involved in PKP3 protein degradation. Phosphorylated by AKT1 and ILK1. Upon insulin-mediated signaling, the activated PKB/AKT1 and RPS6KA3 protein kinases phosphorylate and deactivate GSK3B, resulting in the dephosphorylation and activation of GYS1. Activated by phosphorylation at Tyr-216. Inactivated by phosphorylation at Ser-9. Phosphorylated in a circadian manner in the hippocampus. In terms of processing, mono-ADP-ribosylation by PARP10 negatively regulates kinase activity. Post-translationally, palmitoylated. Palmitoylation by ZDHHC4 prevents AKT1-mediated phosphorylation.

The protein localises to the cytoplasm. It is found in the nucleus. Its subcellular location is the membrane. It localises to the cell membrane. The enzyme catalyses L-seryl-[tau protein] + ATP = O-phospho-L-seryl-[tau protein] + ADP + H(+). The catalysed reaction is L-threonyl-[tau protein] + ATP = O-phospho-L-threonyl-[tau protein] + ADP + H(+). It catalyses the reaction L-seryl-[protein] + ATP = O-phospho-L-seryl-[protein] + ADP + H(+). It carries out the reaction L-threonyl-[protein] + ATP = O-phospho-L-threonyl-[protein] + ADP + H(+). Activated by phosphorylation at Tyr-216. In response to insulin, inhibited by phosphorylation at Ser-9 by PKB/AKT1; phosphorylation at this site causes a conformational change, preventing access of substrates to the active site. Inhibited by IL22 treatment which also triggers phosphorylation at Ser-9, promoting inactivation. Inhibited by lithium. Constitutively active protein kinase that acts as a negative regulator in the hormonal control of glucose homeostasis, Wnt signaling and regulation of transcription factors and microtubules, by phosphorylating and inactivating glycogen synthase (GYS1 or GYS2), EIF2B, CTNNB1/beta-catenin, APC, AXIN1, DPYSL2/CRMP2, JUN, NFATC1/NFATC, MAPT/TAU and MACF1. Requires primed phosphorylation of the majority of its substrates. In skeletal muscle, contributes to insulin regulation of glycogen synthesis by phosphorylating and inhibiting GYS1 activity and hence glycogen synthesis. May also mediate the development of insulin resistance by regulating activation of transcription factors. Regulates protein synthesis by controlling the activity of initiation factor 2B (EIF2BE/EIF2B5) in the same manner as glycogen synthase. In Wnt signaling, GSK3B forms a multimeric complex with APC, AXIN1 and CTNNB1/beta-catenin and phosphorylates the N-terminus of CTNNB1 leading to its degradation mediated by ubiquitin/proteasomes. Phosphorylates JUN at sites proximal to its DNA-binding domain, thereby reducing its affinity for DNA. Phosphorylates NFATC1/NFATC on conserved serine residues promoting NFATC1/NFATC nuclear export, shutting off NFATC1/NFATC gene regulation, and thereby opposing the action of calcineurin. Phosphorylates MAPT/TAU on 'Thr-548', decreasing significantly MAPT/TAU ability to bind and stabilize microtubules. MAPT/TAU is the principal component of neurofibrillary tangles in Alzheimer disease. Plays an important role in ERBB2-dependent stabilization of microtubules at the cell cortex. Phosphorylates MACF1, inhibiting its binding to microtubules which is critical for its role in bulge stem cell migration and skin wound repair. Probably regulates NF-kappa-B (NFKB1) at the transcriptional level and is required for the NF-kappa-B-mediated anti-apoptotic response to TNF-alpha (TNF/TNFA). Negatively regulates replication in pancreatic beta-cells, resulting in apoptosis, loss of beta-cells and diabetes. Through phosphorylation of the anti-apoptotic protein MCL1, may control cell apoptosis in response to growth factors deprivation. Phosphorylates MUC1 in breast cancer cells, decreasing the interaction of MUC1 with CTNNB1/beta-catenin. Is necessary for the establishment of neuronal polarity and axon outgrowth. Phosphorylates MARK2, leading to inhibition of its activity. Phosphorylates SIK1 at 'Thr-182', leading to sustainment of its activity. Phosphorylates ZC3HAV1 which enhances its antiviral activity. Phosphorylates SNAI1, leading to its ubiquitination and proteasomal degradation. Phosphorylates SFPQ at 'Thr-687' upon T-cell activation. Phosphorylates NR1D1 st 'Ser-55' and 'Ser-59' and stabilizes it by protecting it from proteasomal degradation. Regulates the circadian clock via phosphorylation of the major clock components including BMAL1, CLOCK and PER2. Phosphorylates CLOCK AT 'Ser-427' and targets it for proteasomal degradation. Phosphorylates BMAL1 at 'Ser-17' and 'Ser-21' and primes it for ubiquitination and proteasomal degradation. Phosphorylates FBXL2 at 'Thr-404' and primes it for ubiquitination by the SCF(FBXO3) complex and proteasomal degradation. Phosphorylates OGT at 'Ser-3' or 'Ser-4' which positively regulates its activity. Phosphorylates MYCN in neuroblastoma cells which may promote its degradation. Regulates the circadian rhythmicity of hippocampal long-term potentiation and BMAL1 and PER2 expression. Acts as a regulator of autophagy by mediating phosphorylation of KAT5/TIP60 under starvation conditions, activating KAT5/TIP60 acetyltransferase activity and promoting acetylation of key autophagy regulators, such as ULK1 and RUBCNL/Pacer. Negatively regulates extrinsic apoptotic signaling pathway via death domain receptors. Promotes the formation of an anti-apoptotic complex, made of DDX3X, BRIC2 and GSK3B, at death receptors, including TNFRSF10B. The anti-apoptotic function is most effective with weak apoptotic signals and can be overcome by stronger stimulation. Phosphorylates E2F1, promoting the interaction between E2F1 and USP11, stabilizing E2F1 and promoting its activity. Phosphorylates mTORC2 complex component RICTOR at 'Ser-1235' in response to endoplasmic stress, inhibiting mTORC2. Phosphorylates FXR1, promoting FXR1 ubiquitination by the SCF(FBXO4) complex and FXR1 degradation by the proteasome. Phosphorylates interleukin-22 receptor subunit IL22RA1, preventing its proteasomal degradation. The sequence is that of Glycogen synthase kinase-3 beta from Rattus norvegicus (Rat).